The primary structure comprises 157 residues: ABA-responsive protein ABR17 (157 aa).

This sequence belongs to the BetVI family.

The chain is ABA-responsive protein ABR17 from Pisum sativum (Garden pea).